A 230-amino-acid polypeptide reads, in one-letter code: Thymine/uracil-DNA glycosylase (230 aa).

4 residues coordinate [4Fe-4S] cluster: Cys-204, Cys-211, Cys-214, and Cys-221.

It belongs to the Nth/MutY family. [4Fe-4S] cluster serves as cofactor.

It carries out the reaction Hydrolyzes mismatched double-stranded DNA and polynucleotides, releasing free thymine.. Functionally, DNA glycosylase that excises thymine from T/G mismatches and uracil from U/G mismatches. Can also process T/GO and U/GO, but not A/G, T/C and U/C. Has weak AP lyase activity. The chain is Thymine/uracil-DNA glycosylase from Pyrobaculum aerophilum (strain ATCC 51768 / DSM 7523 / JCM 9630 / CIP 104966 / NBRC 100827 / IM2).